The sequence spans 132 residues: MRGNKAKIPRSINTGTYLECADNTGARTLFVVSVKKYRGVKNRQPCAGIGDMVVVSVKKGTPEMRKQIFNAVIIRQKKEFRRPDGLRVKFEDNAAVITDDAGVPKGSEIKGPVAREVAERFGKIASSAAIIV.

The protein belongs to the universal ribosomal protein uL14 family. In terms of assembly, part of the 50S ribosomal subunit. Forms a cluster with proteins L3 and L24e, part of which may contact the 16S rRNA in 2 intersubunit bridges.

Binds to 23S rRNA. Forms part of two intersubunit bridges in the 70S ribosome. This Methanothrix thermoacetophila (strain DSM 6194 / JCM 14653 / NBRC 101360 / PT) (Methanosaeta thermophila) protein is Large ribosomal subunit protein uL14.